The chain runs to 388 residues: S-adenosylmethionine synthase (388 aa).

Histidine 16 is an ATP binding site. Residue aspartate 18 coordinates Mg(2+). Glutamate 44 serves as a coordination point for K(+). Residues glutamate 57 and glutamine 100 each contribute to the L-methionine site. The interval 100 to 110 (QSPEIAQGVDR) is flexible loop. Residues 165–167 (DAK), 231–232 (KF), aspartate 240, 246–247 (RK), alanine 263, and lysine 267 contribute to the ATP site. An L-methionine-binding site is contributed by aspartate 240. An L-methionine-binding site is contributed by lysine 271.

The protein belongs to the AdoMet synthase family. As to quaternary structure, homotetramer; dimer of dimers. The cofactor is Mg(2+). K(+) serves as cofactor.

It localises to the cytoplasm. The enzyme catalyses L-methionine + ATP + H2O = S-adenosyl-L-methionine + phosphate + diphosphate. Its pathway is amino-acid biosynthesis; S-adenosyl-L-methionine biosynthesis; S-adenosyl-L-methionine from L-methionine: step 1/1. Catalyzes the formation of S-adenosylmethionine (AdoMet) from methionine and ATP. The overall synthetic reaction is composed of two sequential steps, AdoMet formation and the subsequent tripolyphosphate hydrolysis which occurs prior to release of AdoMet from the enzyme. The sequence is that of S-adenosylmethionine synthase from Psychrobacter arcticus (strain DSM 17307 / VKM B-2377 / 273-4).